The primary structure comprises 477 residues: Pup--protein ligase (477 aa).

Residue Glu16 participates in Mg(2+) binding. Arg60 contributes to the ATP binding site. Mg(2+) is bound at residue Tyr62. Asp64 acts as the Proton acceptor in catalysis. Glu70 contacts Mg(2+). ATP contacts are provided by Thr73 and Trp441.

This sequence belongs to the Pup ligase/Pup deamidase family. Pup-conjugating enzyme subfamily.

The catalysed reaction is ATP + [prokaryotic ubiquitin-like protein]-L-glutamate + [protein]-L-lysine = ADP + phosphate + N(6)-([prokaryotic ubiquitin-like protein]-gamma-L-glutamyl)-[protein]-L-lysine.. It participates in protein degradation; proteasomal Pup-dependent pathway. The protein operates within protein modification; protein pupylation. In terms of biological role, catalyzes the covalent attachment of the prokaryotic ubiquitin-like protein modifier Pup to the proteasomal substrate proteins, thereby targeting them for proteasomal degradation. This tagging system is termed pupylation. The ligation reaction involves the side-chain carboxylate of the C-terminal glutamate of Pup and the side-chain amino group of a substrate lysine. In Corynebacterium kroppenstedtii (strain DSM 44385 / JCM 11950 / CIP 105744 / CCUG 35717), this protein is Pup--protein ligase.